The following is a 985-amino-acid chain: MSLPSLADFPAILLPFITRARQTWRTALTELSAEALASFEAWPEARRTAFDRVCAASDFVTEQICRDPQMLLQLAGSGELERSFSVGELRGQIADALSSAVTEDELGRNLRRQRARQQVRIIWRDLTRQADLIETCRDLSEMADASIDLAYQWLYPRHCQQFGTPTGRHCGLPQQMVILGMGKLGAVELNLSSDIDLIFAYPEGGETVGTKRALDNQEFFIRLGQRLIKALDPVTVDGFVFRVDMRLRPYGSSGALVLSFNALEQYYQDQGRDWERYAMIKARVVGGDLAAGAELLEMLRPFVYRRYLDFSAIEALRTMKQLIQQEVKRKGMAENIKLGAGGIREVEFIAQAFQLIHGGRDLSLQQRPLFNVLKTLEGQGYLPSAVTEELREGYEFLRYTEHAIQAIADRQTQMLPDNEQDQARIALIMGFADWASFHERLMYWRSRVSWHFRQVIADPDSDPDDELQDDSEVVVGGEWLPLWEESQDEDAAGRQLLQAGFVDTGKALKSLADLRSSPNLRSMQRLSRERLDAFIPRLLAQAVEHEKPDLVLERVLPLVEAVARRSAYLVLLTENPDALRQLLTLCAASPWIAEQIARFPLLLDELLNEGRLFNPPLAPELAAELRERLVRIPEDDLEQQMEALRHFKLAHSLRVAASEISGSLPLMKVSDYLTWLAEAILDQVLALAWRYSVARHGTPSRPDGTLCDPGFVIVGYGKVGGIELGHGSDLDLVFIHDGDLQTETDGAKPIDSAQFFTRLGQRVIHLLTTQTNSGQLYDVDMRLRPSGASGLLVSSLGAFARYQANEAWTWEHQALVRARVLTGSRDVGEQFEKVRADVLGRERDLDTLRAEVSEMRAKMRDNLGTRLTAAGRAANAFEASVPFDLKQDAGGIVDIEFMVQYAALAWSREHPALLQHTDNIRILEGLEEAGLLPDVDASLLREAYKAYRSAAHRQALQKQAGVVGGDQFHAQRREVMRIWAQMGLS.

Residues 1–460 are adenylyl removase; it reads MSLPSLADFP…HFRQVIADPD (460 aa). The adenylyl transferase stretch occupies residues 476-985; that stretch reads GGEWLPLWEE…MRIWAQMGLS (510 aa).

This sequence belongs to the GlnE family. It depends on Mg(2+) as a cofactor.

It catalyses the reaction [glutamine synthetase]-O(4)-(5'-adenylyl)-L-tyrosine + phosphate = [glutamine synthetase]-L-tyrosine + ADP. The catalysed reaction is [glutamine synthetase]-L-tyrosine + ATP = [glutamine synthetase]-O(4)-(5'-adenylyl)-L-tyrosine + diphosphate. Involved in the regulation of glutamine synthetase GlnA, a key enzyme in the process to assimilate ammonia. When cellular nitrogen levels are high, the C-terminal adenylyl transferase (AT) inactivates GlnA by covalent transfer of an adenylyl group from ATP to specific tyrosine residue of GlnA, thus reducing its activity. Conversely, when nitrogen levels are low, the N-terminal adenylyl removase (AR) activates GlnA by removing the adenylyl group by phosphorolysis, increasing its activity. The regulatory region of GlnE binds the signal transduction protein PII (GlnB) which indicates the nitrogen status of the cell. In Pseudomonas syringae pv. tomato (strain ATCC BAA-871 / DC3000), this protein is Bifunctional glutamine synthetase adenylyltransferase/adenylyl-removing enzyme.